Reading from the N-terminus, the 139-residue chain is Large ribosomal subunit protein uL16c (139 aa).

The protein belongs to the universal ribosomal protein uL16 family. In terms of assembly, part of the 50S ribosomal subunit.

Its subcellular location is the plastid. The protein resides in the chloroplast. In Cryptomeria japonica (Japanese cedar), this protein is Large ribosomal subunit protein uL16c.